A 92-amino-acid polypeptide reads, in one-letter code: Promotilin (92 aa).

The tract at residues 12–49 (RMQEKERNRGQKKSLGLQQRSEEVGSLDPTEAAEEEGK) is disordered.

The protein belongs to the motilin family.

The protein localises to the secreted. Plays an important role in the regulation of interdigestive gastrointestinal motility and indirectly causes rhythmic contraction of duodenal and colonic smooth muscle. The sequence is that of Promotilin (MLN) from Equus caballus (Horse).